The following is a 440-amino-acid chain: 3-phosphoshikimate 1-carboxyvinyltransferase (440 aa).

Residues K26, S27, and R31 each contribute to the 3-phosphoshikimate site. Residue K26 participates in phosphoenolpyruvate binding. Phosphoenolpyruvate contacts are provided by G99 and R127. 4 residues coordinate 3-phosphoshikimate: S172, Q174, D320, and K347. Residue Q174 participates in phosphoenolpyruvate binding. Catalysis depends on D320, which acts as the Proton acceptor. Phosphoenolpyruvate-binding residues include R351 and R392.

The protein belongs to the EPSP synthase family. Monomer.

Its subcellular location is the cytoplasm. The enzyme catalyses 3-phosphoshikimate + phosphoenolpyruvate = 5-O-(1-carboxyvinyl)-3-phosphoshikimate + phosphate. Its pathway is metabolic intermediate biosynthesis; chorismate biosynthesis; chorismate from D-erythrose 4-phosphate and phosphoenolpyruvate: step 6/7. Functionally, catalyzes the transfer of the enolpyruvyl moiety of phosphoenolpyruvate (PEP) to the 5-hydroxyl of shikimate-3-phosphate (S3P) to produce enolpyruvyl shikimate-3-phosphate and inorganic phosphate. This chain is 3-phosphoshikimate 1-carboxyvinyltransferase, found in Xanthomonas oryzae pv. oryzae (strain MAFF 311018).